The sequence spans 74 residues: Small integral membrane protein 15 (74 aa).

Residues 20-40 form a helical membrane-spanning segment; that stretch reads YGFLTTVILALTPLFLASAVL. The stretch at 42 to 74 forms a coiled coil; sequence WKLAKMIEAREKEQKKKQKRQENIAKAKRLKKD. Over residues 55–66 the composition is skewed to basic and acidic residues; it reads QKKKQKRQENIA. The disordered stretch occupies residues 55–74; it reads QKKKQKRQENIAKAKRLKKD.

This sequence belongs to the SMIM15 family.

The protein localises to the membrane. This Homo sapiens (Human) protein is Small integral membrane protein 15 (SMIM15).